The sequence spans 348 residues: GTP 3',8-cyclase (348 aa).

The 225-residue stretch at 24–248 (PFGRAVTYLR…TDIDYQTGGP (225 aa)) folds into the Radical SAM core domain. R33 is a GTP binding site. [4Fe-4S] cluster contacts are provided by C40 and C44. Residue Y46 coordinates S-adenosyl-L-methionine. C47 is a [4Fe-4S] cluster binding site. R82 contacts GTP. Position 86 (G86) interacts with S-adenosyl-L-methionine. Residue T115 participates in GTP binding. S139 serves as a coordination point for S-adenosyl-L-methionine. Position 175 (K175) interacts with GTP. M209 provides a ligand contact to S-adenosyl-L-methionine. 2 residues coordinate [4Fe-4S] cluster: C272 and C275. Residue 277 to 279 (RVR) participates in GTP binding. Position 289 (C289) interacts with [4Fe-4S] cluster.

This sequence belongs to the radical SAM superfamily. MoaA family. In terms of assembly, monomer and homodimer. Requires [4Fe-4S] cluster as cofactor.

The enzyme catalyses GTP + AH2 + S-adenosyl-L-methionine = (8S)-3',8-cyclo-7,8-dihydroguanosine 5'-triphosphate + 5'-deoxyadenosine + L-methionine + A + H(+). It functions in the pathway cofactor biosynthesis; molybdopterin biosynthesis. In terms of biological role, catalyzes the cyclization of GTP to (8S)-3',8-cyclo-7,8-dihydroguanosine 5'-triphosphate. The protein is GTP 3',8-cyclase of Rhizobium etli (strain ATCC 51251 / DSM 11541 / JCM 21823 / NBRC 15573 / CFN 42).